A 275-amino-acid polypeptide reads, in one-letter code: Subtilisin (275 aa).

A Ca(2+)-binding site is contributed by Gln-2. The region spanning 5 to 274 (PYGISQIKAP…KGLINVQAAA (270 aa)) is the Peptidase S8 domain. The active-site Charge relay system is Asp-32. Asp-41 contributes to the Ca(2+) binding site. His-64 functions as the Charge relay system in the catalytic mechanism. Ca(2+)-binding residues include Leu-75, Asn-77, Ile-79, Val-81, Ala-169, Tyr-171, and Thr-174. The active-site Charge relay system is Ser-221.

The protein belongs to the peptidase S8 family. Requires Ca(2+) as cofactor.

It localises to the secreted. It catalyses the reaction Hydrolysis of proteins with broad specificity for peptide bonds, and a preference for a large uncharged residue in P1. Hydrolyzes peptide amides.. Its function is as follows. Subtilisin is an extracellular alkaline serine protease, it catalyzes the hydrolysis of proteins and peptide amides. This chain is Subtilisin (apr), found in Bacillus pumilus (Bacillus mesentericus).